The following is a 2038-amino-acid chain: Fer-1-like protein 5 (2038 aa).

C2 domains are found at residues 1 to 100 (MLRV…MFVR), 145 to 265 (TQKK…TLLR), 307 to 424 (QNTR…QGMY), 1055 to 1186 (TPED…FTPL), 1225 to 1345 (IPCK…SLNY), 1467 to 1587 (PKPP…ARCG), and 1705 to 1853 (GPPG…KQCS). Asp1502, Asp1508, Asp1557, Phe1558, Asp1559, Asp1565, Asp1824, Ser1827, and Asp1830 together coordinate Ca(2+). Residues 1961 to 1981 (IICLVVTLVIGFILLNFVYSA) traverse the membrane as a helical segment.

It belongs to the ferlin family. In terms of assembly, interacts (via second C2 domain) with EHD1 and EHD2. Ca(2+) serves as cofactor. As to expression, expressed in differentiating myoblasts and myotubes.

The protein resides in the cell membrane. Its subcellular location is the membrane. Functionally, plays a role in myoblast fusion; probable mediator of endocytic recycling for membrane trafficking events during myotube formation. The protein is Fer-1-like protein 5 (Fer1l5) of Mus musculus (Mouse).